Consider the following 244-residue polypeptide: Capsid protein (244 aa).

The Bipartite nuclear localization signal signature appears at 1–24 (MSTSKRKRADEAQWNKRSTKKKGS). Positions 1–39 (MSTSKRKRADEAQWNKRSTKKKGSAPQAKKPGGKVEKPS) are disordered.

Belongs to the geminiviridae capsid protein family. In terms of assembly, homomultimer. Interacts with the movement protein. Binds to single-stranded and double-stranded viral DNA.

The protein localises to the virion. It localises to the host nucleus. In terms of biological role, encapsidates the viral genome into characteristic twinned ('geminate') particles. Binds the genomic viral ssDNA and shuttles it into and out of the cell nucleus. Plays a role in protection of the genome from degradation, virus acquisition and transmission by insect vectors, infectivity, and systemic movement. The CP of monopartite geminiviruses is absolutely essential for virus movement. The protein is Capsid protein of Avena sativa (Oat).